We begin with the raw amino-acid sequence, 770 residues long: MSMMTSTPTKRSVKLDDIWPELEEGIYKIITDLNKGFPKQKWIALYTHVYDYCAASQSKSSAKVGMPKQQASGANYVGEDLYNRLNLFLKKHMSQLLKLTETKMDEPLLNYYYTEWDRYTSAMKYINNIFQYMNRYWIKREIDDGKKEVYEIFILSLVIWRDCLFTPLKQRLTNSLLDIIESERNGYQINTHLIKGVINGYVSLGLNREKPKETILQVYKSGFEELFLTATENYYTNESAKFISENSVADYMKKVETRLNEEVKRVQQYLHQNTESELIAKCEKVLIEKHVEVIWNEFQTLLEKDKIPDLTRMYSLLSRIPRGLEPLRTTLEKHVQNVGLQAVSSIATNGVIEPKVYIETLLKVFKKYNELVTGAFRSDTGFVASLDKACRRFINENAVTIAAKSSSKSPELLARFTDFLLKKSPNNPEESEMEQLLNDVMIVFKYIEDKDVFQDFYSKMLAKRLIHGTSTSEDLEGTMIGKLKSTCGYEYTSKLQRMFTDMSLSRELLDRFNNHIEQVERSSLNIDFSVLVLATGSWPLQPPSTNFSIPKELQACEQLFQKFYQNQHSGRKLNWLHHLSKGELKTKYLQTSKSGYTLQCSTYQIGVLLQFNQYETLTSEEIQESTQLIDSVLKGTLTSLAKSKILLADPPLDDEEIAKTTKFSLNKQFKNKKTKIFINVPVLTQVKEEIDSIHKTVEEDRKLQIQAAIVRIMKMRKQLAHSGLMTEVISQLQTRFNPKVNIIKKCIDILIEKEYLMRVEGKKDHYSYVA.

A Cullin neddylation domain is found at 700 to 761 (DRKLQIQAAI…EKEYLMRVEG (62 aa)). Residue Lys-714 forms a Glycyl lysine isopeptide (Lys-Gly) (interchain with G-Cter in NEDD8) linkage.

This sequence belongs to the cullin family. Part of a complex that includes culA, fbxA and regA. Formation of this complex is dependent on the MAP kinase erkB. In terms of processing, neddylated; which enhances the ubiquitination activity of SCF.

The protein operates within protein modification; protein ubiquitination. Functionally, probable core component of cullin-based SCF-like E3 ubiquitin-protein ligase complexes which mediate the ubiquitination and subsequent proteasomal degradation of target proteins. The E3 ubiquitin-protein ligase activity of the complex is dependent on the neddylation of the cullin subunit. Required at several stages during development. CulA and fbxA regulate multicellular development by targeting regA for degradation via a pathway that requires erkB function, leading to an increase in cAMP and PKA activity. The sequence is that of Cullin-1 (culA) from Dictyostelium discoideum (Social amoeba).